Reading from the N-terminus, the 689-residue chain is Glycine--tRNA ligase beta subunit (689 aa).

It belongs to the class-II aminoacyl-tRNA synthetase family. Tetramer of two alpha and two beta subunits.

The protein localises to the cytoplasm. It carries out the reaction tRNA(Gly) + glycine + ATP = glycyl-tRNA(Gly) + AMP + diphosphate. The sequence is that of Glycine--tRNA ligase beta subunit from Oenococcus oeni (strain ATCC BAA-331 / PSU-1).